The following is a 150-amino-acid chain: T-complex protein 1 subunit beta (150 aa).

A Mg(2+)-binding site is contributed by aspartate 35. Residues glycine 36, threonine 37, threonine 38, and serine 39 each contribute to the ADP site. 3 residues coordinate ATP: glycine 36, threonine 37, and threonine 38.

The protein belongs to the TCP-1 chaperonin family. As to quaternary structure, component of the chaperonin-containing T-complex (TRiC), a hexadecamer composed of two identical back-to-back stacked rings enclosing a protein folding chamber. Each ring is made up of eight different subunits: TCP1/CCT1, CCT2, CCT3, CCT4, CCT5, CCT6A/CCT6, CCT7, CCT8. Interacts with PACRG. Interacts with FLCN. Interacts with DLEC1. Interacts with SVEP1.

Its subcellular location is the cytoplasm. It catalyses the reaction ATP + H2O = ADP + phosphate + H(+). Functionally, component of the chaperonin-containing T-complex (TRiC), a molecular chaperone complex that assists the folding of actin, tubulin and other proteins upon ATP hydrolysis. The TRiC complex mediates the folding of WRAP53/TCAB1, thereby regulating telomere maintenance. As part of the TRiC complex may play a role in the assembly of BBSome, a complex involved in ciliogenesis regulating transports vesicles to the cilia. This chain is T-complex protein 1 subunit beta, found in Mesocricetus auratus (Golden hamster).